A 50-amino-acid polypeptide reads, in one-letter code: Protein PsbN (50 aa).

Residues 14–34 (IAVTILAILLALTGFGLWSAF) form a helical membrane-spanning segment.

It belongs to the PsbN family.

The protein localises to the cellular thylakoid membrane. Its function is as follows. May play a role in photosystem I and II biogenesis. In Prochlorococcus marinus (strain MIT 9215), this protein is Protein PsbN.